Here is a 361-residue protein sequence, read N- to C-terminus: Chorismate synthase (361 aa).

The NADP(+) site is built by arginine 48 and arginine 54. FMN is bound by residues 125-127 (RSS), 238-239 (NA), glycine 278, 293-297 (KPTSS), and arginine 319.

This sequence belongs to the chorismate synthase family. As to quaternary structure, homotetramer. FMNH2 is required as a cofactor.

The enzyme catalyses 5-O-(1-carboxyvinyl)-3-phosphoshikimate = chorismate + phosphate. Its pathway is metabolic intermediate biosynthesis; chorismate biosynthesis; chorismate from D-erythrose 4-phosphate and phosphoenolpyruvate: step 7/7. Its function is as follows. Catalyzes the anti-1,4-elimination of the C-3 phosphate and the C-6 proR hydrogen from 5-enolpyruvylshikimate-3-phosphate (EPSP) to yield chorismate, which is the branch point compound that serves as the starting substrate for the three terminal pathways of aromatic amino acid biosynthesis. This reaction introduces a second double bond into the aromatic ring system. The polypeptide is Chorismate synthase (Salmonella paratyphi A (strain ATCC 9150 / SARB42)).